Reading from the N-terminus, the 103-residue chain is UPF0145 protein BCE_5284 (103 aa).

The protein belongs to the UPF0145 family.

This Bacillus cereus (strain ATCC 10987 / NRS 248) protein is UPF0145 protein BCE_5284.